Here is a 397-residue protein sequence, read N- to C-terminus: Tryptophan synthase beta chain (397 aa).

K87 is modified (N6-(pyridoxal phosphate)lysine).

It belongs to the TrpB family. As to quaternary structure, tetramer of two alpha and two beta chains. It depends on pyridoxal 5'-phosphate as a cofactor.

It carries out the reaction (1S,2R)-1-C-(indol-3-yl)glycerol 3-phosphate + L-serine = D-glyceraldehyde 3-phosphate + L-tryptophan + H2O. It participates in amino-acid biosynthesis; L-tryptophan biosynthesis; L-tryptophan from chorismate: step 5/5. The beta subunit is responsible for the synthesis of L-tryptophan from indole and L-serine. The chain is Tryptophan synthase beta chain from Escherichia coli O139:H28 (strain E24377A / ETEC).